Reading from the N-terminus, the 81-residue chain is Protein Vpu (81 aa).

Residues 1 to 7 are Extracellular-facing; that stretch reads MSILQIV. The chain crosses the membrane as a helical span at residues 8–28; the sequence is AIVAIIVALILAIVVWTIVYI. Over 29–81 the chain is Cytoplasmic; the sequence is EYKRLLRQRKIDWLIDRIRERAEDSGNESEGDTEELSTLVEMEPDNFRNDNDM. Residues 50–81 form a disordered region; that stretch reads AEDSGNESEGDTEELSTLVEMEPDNFRNDNDM. Phosphoserine; by host CK2 occurs at positions 53 and 57. The span at 53 to 63 shows a compositional bias: acidic residues; it reads SGNESEGDTEE.

Belongs to the HIV-1 VPU protein family. In terms of assembly, homopentamer. Interacts with host CD4 and BRTC; these interactions induce proteasomal degradation of CD4. Interacts with host BST2; this interaction leads to the degradation of host BST2. Interacts with host FBXW11. Interacts with host AP1M1; this interaction plays a role in the mistrafficking and subsequent degradation of host BST2. Interacts with host RANBP2; this interaction allows Vpu to down-regulate host BLM sumoylation. Post-translationally, phosphorylated by host CK2. This phosphorylation is necessary for interaction with human BTRC and degradation of CD4.

Its subcellular location is the host membrane. Ion channel activity is inhibited by hexamethylene amiloride in vitro. Functionally, enhances virion budding by targeting host CD4 and Tetherin/BST2 to proteasome degradation. Degradation of CD4 prevents any unwanted premature interactions between viral Env and its host receptor CD4 in the endoplasmic reticulum. Degradation of antiretroviral protein Tetherin/BST2 is important for virion budding, as BST2 tethers new viral particles to the host cell membrane. Mechanistically, Vpu bridges either CD4 or BST2 to BTRC, a substrate recognition subunit of the Skp1/Cullin/F-box protein E3 ubiquitin ligase, induces their ubiquitination and subsequent proteasomal degradation. The alteration of the E3 ligase specificity by Vpu seems to promote the degradation of host IKBKB, leading to NF-kappa-B down-regulation and subsequent apoptosis. Acts as a viroporin that forms an oligomeric ion channel in membranes. Modulates the host DNA repair mechanisms to promote degradation of nuclear viral cDNA in cells that are already productively infected in order to suppress immune sensing and proviral hyper-integration (superinfection). Manipulates PML-NBs and modulates SUMOylation of host BLM protein thereby enhancing its DNA-end processing activity toward viral unintegrated linear DNA. Also inhibits RAD52-mediated homologous repair of viral cDNA, preventing the generation of dead-end circular forms of single copies of the long terminal repeat and permitting sustained nucleolytic attack. In Human immunodeficiency virus type 1 (HIV-1), this protein is Protein Vpu.